Reading from the N-terminus, the 594-residue chain is APOBEC1 complementation factor (594 aa).

3 RRM domains span residues 56-134 (CEIF…ASVD), 136-218 (CRLF…WAEP), and 231-303 (KILY…LAKP). Residues 359–408 (HFPATKGHLSNRALIRTPSVREIYMNVPVGAAGVRGLGGRGYLAYTGLGR) form a required for nuclear localization region. The residue at position 498 (T498) is a Phosphothreonine.

In terms of assembly, part of the apolipoprotein B mRNA editing complex with APOBEC1. Interacts with TNPO2; TNPO2 may be responsible for transport of A1CF into the nucleus. Interacts with SYNCRIP. Interacts with CELF2/CUGBP2. Interacts with RBM47. As to expression, isoforms 1 and 2 are widely expressed while isoforms 3 and 4 are restricted to liver and small intestine.

It is found in the nucleus. It localises to the endoplasmic reticulum. Its subcellular location is the cytoplasm. Essential component of the apolipoprotein B mRNA editing enzyme complex which is responsible for the postranscriptional editing of a CAA codon for Gln to a UAA codon for stop in APOB mRNA. Binds to APOB mRNA and is probably responsible for docking the catalytic subunit, APOBEC1, to the mRNA to allow it to deaminate its target cytosine. The complex also seems to protect the edited APOB mRNA from nonsense-mediated decay. The sequence is that of APOBEC1 complementation factor (A1cf) from Rattus norvegicus (Rat).